Here is a 312-residue protein sequence, read N- to C-terminus: Olfactory receptor 1D2 (312 aa).

The Extracellular segment spans residues 1-25 (MDGGNQSEGSEFLLLGMSESPEQQR). An N-linked (GlcNAc...) asparagine glycan is attached at Asn-5. The chain crosses the membrane as a helical span at residues 26–49 (ILFWMFLSMYLVTVVGNVLIILAI). The Cytoplasmic segment spans residues 50–57 (SSDSCLHT). The helical transmembrane segment at 58 to 79 (PMYFFLANLSFTDLFFVTNTIP) threads the bilayer. Over 80–100 (KMLVNLQSQNKAISYAGCLTQ) the chain is Extracellular. A disulfide bridge connects residues Cys-97 and Cys-189. Residues 101-120 (LYFLVSLVALDNLILAVMAY) traverse the membrane as a helical segment. Over 121–139 (DRYVAICCPLHYTTAMSPK) the chain is Cytoplasmic. A helical transmembrane segment spans residues 140 to 158 (LCILLLSLCWVLSVLYGLI). Topologically, residues 159 to 196 (HTLLMTRVTFCGSRKIHYIFCEMYVLLRMACSNIQTNH) are extracellular. Asn-195 is a glycosylation site (N-linked (GlcNAc...) asparagine). The chain crosses the membrane as a helical span at residues 197-219 (TVLIATGCFIFLIPFGFVIISYV). Topologically, residues 220–236 (LIIRAILRIPSLSKKYK) are cytoplasmic. The helical transmembrane segment at 237-259 (AFSTCASHLGAVSLFYGTLCMVY) threads the bilayer. The Extracellular segment spans residues 260 to 271 (LKPLHTYSVKDS). The chain crosses the membrane as a helical span at residues 272-291 (VATVMYAVVTPMMNPFIYSL). Residues 292–312 (RNKDMHGALGRLLDKHFKRLT) lie on the Cytoplasmic side of the membrane.

This sequence belongs to the G-protein coupled receptor 1 family.

It is found in the cell membrane. Functionally, odorant receptor. The polypeptide is Olfactory receptor 1D2 (OR1D2) (Pan troglodytes (Chimpanzee)).